The primary structure comprises 444 residues: Spermatogenesis-associated protein 1 (444 aa).

Positions 145 to 160 are enriched in basic and acidic residues; sequence GTIHRPDSLSLSKDEP. The disordered stretch occupies residues 145 to 229; sequence GTIHRPDSLS…DEGEEDDKAT (85 aa). Residues 268 to 403 adopt a coiled-coil conformation; the sequence is SLLKIEREKI…RKLDTDKMKL (136 aa).

Interacts with IFT20.

It localises to the cytoplasmic vesicle. The protein resides in the secretory vesicle. It is found in the acrosome. This Rattus norvegicus (Rat) protein is Spermatogenesis-associated protein 1 (Spata1).